Reading from the N-terminus, the 366-residue chain is Bacteriochlorophyll a protein (366 aa).

Bacteriochlorophyll a contacts are provided by histidine 110, histidine 145, histidine 290, histidine 297, and histidine 298.

As to quaternary structure, homotrimer. Each subunit contains 7 molecules of bacteriochlorophyll a.

Its function is as follows. Intermediary in the transfer of excitation energy from the chlorophyll to the reaction centers. The chain is Bacteriochlorophyll a protein from Prosthecochloris aestuarii.